Reading from the N-terminus, the 129-residue chain is Large-conductance mechanosensitive channel (129 aa).

2 helical membrane passes run 10-30 and 70-90; these read FAVKGNVVDMAVGVIIGGAFG and AVMLKYGAFIQNVFLLGVIAI.

This sequence belongs to the MscL family. As to quaternary structure, homopentamer.

The protein resides in the cell inner membrane. In terms of biological role, channel that opens in response to stretch forces in the membrane lipid bilayer. May participate in the regulation of osmotic pressure changes within the cell. This Actinobacillus pleuropneumoniae serotype 3 (strain JL03) protein is Large-conductance mechanosensitive channel.